A 282-amino-acid polypeptide reads, in one-letter code: Caspase-3 (282 aa).

Catalysis depends on residues His-131 and Cys-174.

The protein belongs to the peptidase C14A family. In terms of assembly, heterotetramer that consists of two anti-parallel arranged heterodimers, each one formed by a 17 kDa (p17) and a 12 kDa (p12) subunit.

The protein resides in the cytoplasm. It carries out the reaction Strict requirement for an Asp residue at positions P1 and P4. It has a preferred cleavage sequence of Asp-Xaa-Xaa-Asp-|- with a hydrophobic amino-acid residue at P2 and a hydrophilic amino-acid residue at P3, although Val or Ala are also accepted at this position.. Functionally, important mediator of apoptosis. At the onset of apoptosis, it proteolytically cleaves poly(ADP-ribose) polymerase PARP1 at a '216-Asp-|-Gly-217' bond. The chain is Caspase-3 (casp3) from Xenopus laevis (African clawed frog).